The following is a 344-amino-acid chain: L-threonine 3-dehydrogenase (344 aa).

Position 42 (Cys-42) interacts with Zn(2+). Active-site charge relay system residues include Thr-44 and His-47. Residues His-67, Glu-68, Cys-97, Cys-100, Cys-103, and Cys-111 each coordinate Zn(2+). NAD(+)-binding positions include Ile-179, Asp-199, Arg-204, 266–268 (LGI), and 290–291 (IY).

It belongs to the zinc-containing alcohol dehydrogenase family. In terms of assembly, homotetramer. It depends on Zn(2+) as a cofactor.

The protein resides in the cytoplasm. It catalyses the reaction L-threonine + NAD(+) = (2S)-2-amino-3-oxobutanoate + NADH + H(+). It participates in amino-acid degradation; L-threonine degradation via oxydo-reductase pathway; glycine from L-threonine: step 1/2. In terms of biological role, catalyzes the NAD(+)-dependent oxidation of L-threonine to 2-amino-3-ketobutyrate. This is L-threonine 3-dehydrogenase from Mesorhizobium japonicum (strain LMG 29417 / CECT 9101 / MAFF 303099) (Mesorhizobium loti (strain MAFF 303099)).